Consider the following 143-residue polypeptide: Large ribosomal subunit protein uL11 (143 aa).

It belongs to the universal ribosomal protein uL11 family. In terms of assembly, part of the ribosomal stalk of the 50S ribosomal subunit. Interacts with L10 and the large rRNA to form the base of the stalk. L10 forms an elongated spine to which L12 dimers bind in a sequential fashion forming a multimeric L10(L12)X complex. One or more lysine residues are methylated.

Forms part of the ribosomal stalk which helps the ribosome interact with GTP-bound translation factors. The chain is Large ribosomal subunit protein uL11 from Pseudomonas fluorescens (strain Pf0-1).